A 73-amino-acid chain; its full sequence is Antimicrobial peptide lumbricin-PG (73 aa).

The first 14 residues, 1–14, serve as a signal peptide directing secretion; the sequence is MLLTISDFLFLSLT. Positions 25–48 are disordered; sequence RPWSDRKNNYSGPQFTYPPEKAPP.

It localises to the secreted. Its function is as follows. Displays antimicrobial activity against the Gram-positive bacterium S.aureus ATCC 2592, the Gram-negative bacteria E.coli ATCC 25922 and P.aeruginosa ATCC 27853, and the fungus C.albicans ATCC 2002. Displays stronger activity against P.aeruginosa and S.aureus than E.coli. Displays very weak hemolytic activity. This is Antimicrobial peptide lumbricin-PG from Metaphire guillelmi (Earthworm).